The sequence spans 187 residues: Protein dj-1beta (187 aa).

Cys45 carries the post-translational modification Cysteine sulfinic acid (-SO2H). Cys104 serves as the catalytic Nucleophile. Cys104 carries the cysteine sulfinic acid (-SO2H); alternate modification.

Oxidation of Cys-45 and Cys-104 in response to oxidative stress. Levels of oxidation increase with age. As to expression, expressed in the head and testis (at protein level). Ubiquitously expressed at constant levels.

The protein localises to the mitochondrion. It is found in the cytoplasm. Its subcellular location is the nucleus. Functionally, plays an important role in cell protection against oxidative stress and cell death by acting as a oxidative stress sensor. Does not play a role in methylglyoxal detoxification. Plays a role in mitochondrial function together with Pink1. In motor neurons regulates structural synaptic plasticity of locomotor behavior as part of the PTEN-phosphatidylinositol 3-kinase pathway in response to oxygen species (ROS) levels. This is Protein dj-1beta from Drosophila melanogaster (Fruit fly).